The primary structure comprises 150 residues: Putative transmembrane protein DDB_G0277665 (150 aa).

The next 2 membrane-spanning stretches (helical) occupy residues 4–24 (TLIIIIVSVIVGYLISHFNIL) and 42–62 (VIVGAIVGQALIYFFVFFLPL).

It is found in the membrane. The polypeptide is Putative transmembrane protein DDB_G0277665 (Dictyostelium discoideum (Social amoeba)).